The following is a 112-amino-acid chain: Mu-ctenitoxin-Pn1a (112 aa).

A signal peptide spans 1-19 (MKLLGIFLVASFAFVLSFG). Positions 20–33 (EEMIEGENPLEDQR) are excised as a propeptide. Cystine bridges form between Cys-39-Cys-56, Cys-46-Cys-62, Cys-53-Cys-85, Cys-55-Cys-73, Cys-64-Cys-71, Cys-91-Cys-106, and Cys-102-Cys-110. Position 111 is a glycine amide (Gly-111).

Belongs to the neurotoxin 04 (omega-agtx) family. 02 (Tx1) subfamily. Contains 7 disulfide bonds. Expressed by the venom gland.

Its subcellular location is the secreted. Its function is as follows. Reversible inhibitor of neuronal sodium channels (Nav1.2/ SCN2A) that binds in proximity to site 1 and displays increasing affinity as the membrane potential is depolarized. Induces excitatory symptoms and spastic paralysis in mice. This Phoneutria nigriventer (Brazilian armed spider) protein is Mu-ctenitoxin-Pn1a.